The sequence spans 217 residues: MNLIFLGPPGAGKGTQAKRVSEKYGIPQISTGDMLREAVAKGTELGKKAKEYMDKGELVPDEVVIGIVKERLQQPDCEKGFILDGFPRTLAQAEALDEMLKELNKKIDAVINVVVPEEEVVKRITYRRTCRNCGAVYHLIYAPPKEDNKCDKCGGELYQRDDDKEETVRERYRVYKQNTEPLIDYYRKKGILYDVDGTKDIEGVWKEIEAILEKIKS.

ATP is bound at residue 10–15; that stretch reads GAGKGT. Positions 30–59 are NMP; the sequence is STGDMLREAVAKGTELGKKAKEYMDKGELV. Residues Thr-31, Arg-36, 57 to 59, 85 to 88, and Gln-92 contribute to the AMP site; these read ELV and GFPR. The tract at residues 126-163 is LID; sequence YRRTCRNCGAVYHLIYAPPKEDNKCDKCGGELYQRDDD. Residue Arg-127 coordinates ATP. The Zn(2+) site is built by Cys-130 and Cys-133. 136 to 137 contacts ATP; that stretch reads VY. Cys-150 and Cys-153 together coordinate Zn(2+). AMP is bound by residues Arg-160 and Arg-171. Lys-199 serves as a coordination point for ATP.

This sequence belongs to the adenylate kinase family. As to quaternary structure, monomer.

The protein localises to the cytoplasm. It carries out the reaction AMP + ATP = 2 ADP. It participates in purine metabolism; AMP biosynthesis via salvage pathway; AMP from ADP: step 1/1. Functionally, catalyzes the reversible transfer of the terminal phosphate group between ATP and AMP. Plays an important role in cellular energy homeostasis and in adenine nucleotide metabolism. This Archaeoglobus fulgidus (strain ATCC 49558 / DSM 4304 / JCM 9628 / NBRC 100126 / VC-16) protein is Adenylate kinase.